The following is a 574-amino-acid chain: Putative ABC transporter ATP-binding protein VVA0347 (574 aa).

2 ABC transporter domains span residues 3 to 244 and 299 to 533; these read IEFS…GIRE and LDVR…ANLT. Residues 37–44 and 332–339 each bind ATP; these read GPSGSGKS and GKNGSGKS.

Belongs to the ABC transporter superfamily.

It localises to the cell inner membrane. Its function is as follows. Probably part of an ABC transporter complex. Responsible for energy coupling to the transport system. In Vibrio vulnificus (strain YJ016), this protein is Putative ABC transporter ATP-binding protein VVA0347.